The primary structure comprises 689 residues: Beta-galactosidase Pbg (689 aa).

R118 lines the substrate pocket. C122 is a binding site for Zn(2+). N156 provides a ligand contact to substrate. The Proton donor role is filled by E157. The Zn(2+) site is built by C162, C164, and C167. E318 serves as the catalytic Nucleophile. Substrate is bound by residues W326 and 366–369 (EKFH).

This sequence belongs to the glycosyl hydrolase 42 family.

It carries out the reaction Hydrolysis of terminal non-reducing beta-D-galactose residues in beta-D-galactosides.. The chain is Beta-galactosidase Pbg from Clostridium perfringens (strain ATCC 13124 / DSM 756 / JCM 1290 / NCIMB 6125 / NCTC 8237 / Type A).